Reading from the N-terminus, the 141-residue chain is Large ribosomal subunit protein uL16 (141 aa).

Over residues 1–17 the composition is skewed to basic residues; sequence MLQPKRTKYRKVQKGRM. The tract at residues 1–29 is disordered; that stretch reads MLQPKRTKYRKVQKGRMKGNSQRGHELSN.

The protein belongs to the universal ribosomal protein uL16 family. As to quaternary structure, part of the 50S ribosomal subunit.

Its function is as follows. Binds 23S rRNA and is also seen to make contacts with the A and possibly P site tRNAs. This is Large ribosomal subunit protein uL16 from Flavobacterium johnsoniae (strain ATCC 17061 / DSM 2064 / JCM 8514 / BCRC 14874 / CCUG 350202 / NBRC 14942 / NCIMB 11054 / UW101) (Cytophaga johnsonae).